Here is a 117-residue protein sequence, read N- to C-terminus: Minor capsid protein VP2 (117 aa).

Belongs to the lagovirus VP2 protein family. In terms of assembly, homooligomer. The portal-like structure consists in 12 copies of VP2. Interacts with capsid protein VP1.

The protein resides in the virion. Its subcellular location is the host cytoplasm. In terms of biological role, minor structural protein that forms a portal-like structure at a unique three-fold axis of symmetry, following binding to the host receptor. The channel formed by VP2 may allow the delivery of the viral genome through the host endosomal membrane. The sequence is that of Minor capsid protein VP2 from Oryctolagus cuniculus (Rabbit).